The sequence spans 424 residues: Glutathione reductase (424 aa).

Residue Lys-8 coordinates FAD. Position 56 (Tyr-56) interacts with glutathione. Residue Ala-72 coordinates FAD. NADP(+)-binding residues include Ala-137, Ile-140, Glu-143, Arg-160, Arg-166, and Gly-236. Asp-277 serves as a coordination point for FAD. Residue Leu-283 coordinates NADP(+). FAD is bound at residue Thr-285. Arg-293 lines the glutathione pocket. NADP(+) is bound at residue Val-316. His-413 is an FAD binding site. Residue His-413 is the Proton acceptor of the active site.

This sequence belongs to the class-I pyridine nucleotide-disulfide oxidoreductase family. As to quaternary structure, homodimer; disulfide-linked. Requires FAD as cofactor.

Its subcellular location is the mitochondrion. The protein localises to the cytoplasm. It carries out the reaction 2 glutathione + NADP(+) = glutathione disulfide + NADPH + H(+). Catalyzes the reduction of glutathione disulfide (GSSG) to reduced glutathione (GSH). Constitutes the major mechanism to maintain a high GSH:GSSG ratio in the cytosol. The sequence is that of Glutathione reductase (Gsr) from Rattus norvegicus (Rat).